Reading from the N-terminus, the 65-residue chain is Large ribosomal subunit protein uL29 (65 aa).

The protein belongs to the universal ribosomal protein uL29 family.

The protein is Large ribosomal subunit protein uL29 of Brevibacillus brevis (strain 47 / JCM 6285 / NBRC 100599).